The following is a 396-amino-acid chain: MSVSIFGSAKANSATKALLLGSGELGKEVAIELQRFGIEVIAADSYENAPAMQVAHSSHVVSMLDGEKLATIIRAEKPDFIIPEVEAIATDTLLALEAEGFNVVPTARAAKLTMDREGIRRLAAETLGIKTSPYIFADSKEEYLSAIEKIGKPCVIKPVMSSSGKGQSIVKSAADLDNAWTYSQVGGRSGEGRIIIEGFVPFDYEITLLTVNAVDGTHFCDPIGHRQENGDYRESWQPQAMSTVALQKAQNIAKKIVTELGGYGLFGMEFFVKGDQVYFSEVSPRPHDTGLVTLVSQDASEFALHVRAILGFPIGRIIQYGPCASSVILGNGLSDDIKFTNLDQALGSVAGAQIRLFAKPDINGQRRLGVAIARGETVEEAVDNAKTVSNKVNIIY.

Residues E24–L25 and E84 contribute to the N(1)-(5-phospho-beta-D-ribosyl)glycinamide site. Residues R116, K157, S162–Q167, E197–V200, and E205 contribute to the ATP site. Residues R121–L310 form the ATP-grasp domain. Positions 269 and 281 each coordinate Mg(2+). Residues D288, K359, and R366 to R367 each bind N(1)-(5-phospho-beta-D-ribosyl)glycinamide.

Belongs to the PurK/PurT family. Homodimer.

The enzyme catalyses N(1)-(5-phospho-beta-D-ribosyl)glycinamide + formate + ATP = N(2)-formyl-N(1)-(5-phospho-beta-D-ribosyl)glycinamide + ADP + phosphate + H(+). It participates in purine metabolism; IMP biosynthesis via de novo pathway; N(2)-formyl-N(1)-(5-phospho-D-ribosyl)glycinamide from N(1)-(5-phospho-D-ribosyl)glycinamide (formate route): step 1/1. Involved in the de novo purine biosynthesis. Catalyzes the transfer of formate to 5-phospho-ribosyl-glycinamide (GAR), producing 5-phospho-ribosyl-N-formylglycinamide (FGAR). Formate is provided by PurU via hydrolysis of 10-formyl-tetrahydrofolate. The protein is Formate-dependent phosphoribosylglycinamide formyltransferase of Psychromonas ingrahamii (strain DSM 17664 / CCUG 51855 / 37).